The following is a 192-amino-acid chain: Ferritin-like protein (192 aa).

Positions 44, 48, and 102 each coordinate Fe(3+). Residues 143-179 are linker; the sequence is RFDHDYADPHAHHDEHRDHLADMPSAGSSHEEVQPVA. Residues 149–163 show a composition bias toward basic and acidic residues; sequence ADPHAHHDEHRDHLA. Positions 149-192 are disordered; sequence ADPHAHHDEHRDHLADMPSAGSSHEEVQPVAHKKKGFTVGSLIQ. The segment at 180–192 is targeting peptide; that stretch reads HKKKGFTVGSLIQ.

As to quaternary structure, homodimer, with 2 Fe atoms bound at the subunit interface (without encapsulin), probably also a dimer when encapsulated. 42 electron-dense accretions can be seen inside the nanocompartment which are probably this cargo protein, although perhaps up to one cargo dimer can be bound per shell protein.

Its subcellular location is the encapsulin nanocompartment. The enzyme catalyses 4 Fe(2+) + O2 + 4 H(+) = 4 Fe(3+) + 2 H2O. Functionally, cargo protein of a type 1 encapsulin nanocompartment. A ferritin-like iron-binding protein probably involved in iron mineralization in the encapsulin nanocompartment. Has ferroxidase activity even when encapsulated, the rate is probably controlled by the rate of Fe flux across the nanocompartment pores. Part of the iron-mineralizing encapsulin-associated Firmicute (IMEF) system. 2 different cargo proteins have been identified (IMEF and Fer); when both are expressed in E.coli with the shell protein only IMEF is detected within the nanocompartment. E.coli expressing all 3 genes stores the largest amount of iron and is protected from Fe/H2O2-induced oxidative stress. This is Ferritin-like protein from Bacillus thermotolerans (Quasibacillus thermotolerans).